The primary structure comprises 532 residues: MGPLHGALLPPISVTVSLLILLLCAPGGRCGVVHTEKSMTAVLGTDVTMPCYYQAEAGEKVAQVVWLKKGANGQNMEIALLNTEYGANIFGAYEGRIKEKAPLDPADGGIVLRNAVQPDEGTYLCRVNTFPAGNFDAELELKVLVPPLPTLGPGPPLTEGEGKSLAASCTAEGNPAPTLTWETDVEGTNTTQKYEHPRSSSVTSEFYVVPTRRMNGKPLTCVVSHPGFQQEKRITHVLQVRYLAEVSVQGHEDGWFVGKEGATLQCQAGGNPAPKYEWSRLNGSLPAEVRMEGNTLQFLRALGAEDAGEYACRASNGIGTKSSTAIVSIAEHQATKIDLVSVSLGSVGILTAVLLVVLVITLLLVNRHHKRQTKQLSEKIEELSTLSREASRRRLNSTTASTDTRLQLEEAMHLRSGMHCDSLRDPSISSMMGEEADRRSYSTLTTLKETETQTELLSTVPDEEVKEDGEEPEQVEQSLEKEPNPTEPDGMVGVANQPFIKQGMAHFYQENGTLRAKPSANGIYINGRGHLV.

Positions M1–C30 are cleaved as a signal peptide. Residues G31–K142 form the Ig-like V-type domain. The Extracellular segment spans residues G31–L344. 3 cysteine pairs are disulfide-bonded: C51–C125, C169–C221, and C266–C312. 2 consecutive Ig-like C2-type domains span residues P146–T235 and A244–S328. The disordered stretch occupies residues G152 to L179. N189 and N282 each carry an N-linked (GlcNAc...) asparagine glycan. The helical transmembrane segment at G345 to V365 threads the bilayer. Over N366–V532 the chain is Cytoplasmic. Residues Q453 to M491 are disordered. Positions P461–Q474 are enriched in acidic residues.

Belongs to the nectin family.

It localises to the cell membrane. Functionally, may be involved in cell adhesion. The chain is Nectin-4 from Xenopus tropicalis (Western clawed frog).